We begin with the raw amino-acid sequence, 354 residues long: Guanine nucleotide-binding protein subunit alpha-14 (354 aa).

The G-alpha domain maps to 33–354; sequence RELKLLLLGT…QLNLREFNLV (322 aa). The G1 motif stretch occupies residues 36-49; the sequence is KLLLLGTGESGKST. Residues 41 to 48, 175 to 181, 200 to 204, 269 to 272, and Ala326 each bind GTP; these read GTGESGKS, LRVRVPT, DVGGQ, and NKKD. Residues Ser48 and Thr181 each coordinate Mg(2+). A G2 motif region spans residues 173 to 181; the sequence is DVLRVRVPT. Residues 196–205 form a G3 motif region; it reads FRMVDVGGQR. A G4 motif region spans residues 265-272; the sequence is ILFLNKKD. The tract at residues 324-329 is G5 motif; it reads TCATDT.

It belongs to the G-alpha family. G(q) subfamily. As to quaternary structure, g proteins are composed of 3 units; alpha, beta and gamma. The alpha chain contains the guanine nucleotide binding site.

In terms of biological role, guanine nucleotide-binding proteins (G proteins) are involved as modulators or transducers in various transmembrane signaling systems. Acts as an activator of phospholipase C. Mediates responses to trypsin. The polypeptide is Guanine nucleotide-binding protein subunit alpha-14 (gna14) (Xenopus laevis (African clawed frog)).